Consider the following 903-residue polypeptide: MTHSAPSNPTQLPSDKFLRTADVRKAFIDFFVSKQHTHVPSSSLVPYNDPTLLFTNAGMNQFKDCFLGIDKRDYTRAVTSQKCVRAGGKHNDLDNVGYTARHHTFFEMLGNFSFGDYFKKSAIAYAWEFLTSKQWLGLDADKLYVTIYESDDEAFDIWHQDIGLAAERIIRIGDNKGAPYASDNFWAMGDTGPCGPCSEVFYDHGEHVEGGLPGTPEEDGDRYIEVWNCVFMQFNRQPDGTMEPLPAPSVDTGMGLERISAILQGVHSNYEIDLFVNLINSAADIIGIKNDNQASLKVVADHIRAVSFLIADGVLPSNEGRGYVLRRIIRRAVRHGNKLGAEDSFFYKMVAPLVKEMGDAYPQLVEKQAFIEKAIEKEEVQFAKTLAQGLRLLDSELESLKSGDVLSGEAAFKLYDTYGFPVDLTADITRERGIGIDEAGFDEQMNIQRQRARDAGKFDVDYSAAIKVETPTEFVGYEQLDEKEVNIIGLYQDGKEVEVLNEGDEGVIVLDRTPFYAEGGGQVGEMGEIRTSSGVFNVEDTKKSGQAFIHHGVVNMGSLQKSQTADAQVVSAIRSASARNHSATHLLHAALRKVLGDSVSQKGSLVSSEMLRFDFSYDNAVSQKDLATIERLVNEQIQANVETHIELMNIDDAMAKGAAALFGEKYGETVRVLTMGTTEIEDGIQKPFSIELCGGLHVKRTGDIGLFKITSESGIAAGIRRIEALTGMGALRYIQQADSQLTALANQLKAKRPEVADRVQTMADKQRELEKQIERLNQKIASAQAATLVDNVQTIADKKVLIAQVAGIDGKAMRGLIDDIKSKLQDTIIILVGEKDGQLALAASVSKSLTGDIKAGDIIRHLADELEGKGGGKPDYAQGGAPSSDKLTGVMQALPNWVASQLS.

H581, H585, C693, and H697 together coordinate Zn(2+).

The protein belongs to the class-II aminoacyl-tRNA synthetase family. Requires Zn(2+) as cofactor.

It is found in the cytoplasm. The enzyme catalyses tRNA(Ala) + L-alanine + ATP = L-alanyl-tRNA(Ala) + AMP + diphosphate. Functionally, catalyzes the attachment of alanine to tRNA(Ala) in a two-step reaction: alanine is first activated by ATP to form Ala-AMP and then transferred to the acceptor end of tRNA(Ala). Also edits incorrectly charged Ser-tRNA(Ala) and Gly-tRNA(Ala) via its editing domain. This chain is Alanine--tRNA ligase, found in Psychrobacter sp. (strain PRwf-1).